The primary structure comprises 133 residues: Profilin (133 aa).

It belongs to the profilin family.

Functionally, more likely to influence phosphoinositide metabolism than actin assembly. This chain is Profilin, found in Camelus.